The following is a 25-amino-acid chain: GLFKVLGSVAKHLLPHVAPIIAEKL.

Position 25 is a leucine amide (Leu-25).

It belongs to the frog skin active peptide (FSAP) family. Caerin subfamily. As to expression, expressed by the skin dorsal glands.

It is found in the secreted. Its function is as follows. Caerin-1.19 shows significant activity against Gram-positive organisms, but is less effective against Gram-negative organisms. The sequence is that of Caerin-1.19 from Ranoidea gracilenta (Dainty green tree frog).